Consider the following 383-residue polypeptide: S-adenosylmethionine synthase (383 aa).

His-16 contributes to the ATP binding site. A Mg(2+)-binding site is contributed by Asp-18. A K(+)-binding site is contributed by Glu-44. 2 residues coordinate L-methionine: Glu-57 and Gln-98. Residues 98-108 (QSPDIAMGVDI) are flexible loop. ATP contacts are provided by residues 158 to 160 (DQK), 226 to 227 (RF), Asp-235, 241 to 242 (RK), Ala-258, and Lys-262. L-methionine is bound at residue Asp-235. Lys-266 provides a ligand contact to L-methionine.

It belongs to the AdoMet synthase family. As to quaternary structure, homotetramer; dimer of dimers. Mg(2+) is required as a cofactor. It depends on K(+) as a cofactor.

It localises to the cytoplasm. It carries out the reaction L-methionine + ATP + H2O = S-adenosyl-L-methionine + phosphate + diphosphate. Its pathway is amino-acid biosynthesis; S-adenosyl-L-methionine biosynthesis; S-adenosyl-L-methionine from L-methionine: step 1/1. In terms of biological role, catalyzes the formation of S-adenosylmethionine (AdoMet) from methionine and ATP. The overall synthetic reaction is composed of two sequential steps, AdoMet formation and the subsequent tripolyphosphate hydrolysis which occurs prior to release of AdoMet from the enzyme. This Fusobacterium nucleatum subsp. nucleatum (strain ATCC 25586 / DSM 15643 / BCRC 10681 / CIP 101130 / JCM 8532 / KCTC 2640 / LMG 13131 / VPI 4355) protein is S-adenosylmethionine synthase.